Here is a 199-residue protein sequence, read N- to C-terminus: Recombination protein RecR (199 aa).

The C4-type zinc-finger motif lies at 58–73 (CKICFNITDKEVCDIC). Residues 81-176 (STICVVSHPM…KVTRIAHGIP (96 aa)) form the Toprim domain.

Belongs to the RecR family.

In terms of biological role, may play a role in DNA repair. It seems to be involved in an RecBC-independent recombinational process of DNA repair. It may act with RecF and RecO. The chain is Recombination protein RecR from Caldanaerobacter subterraneus subsp. tengcongensis (strain DSM 15242 / JCM 11007 / NBRC 100824 / MB4) (Thermoanaerobacter tengcongensis).